A 455-amino-acid polypeptide reads, in one-letter code: L-serine dehydratase (455 aa).

The protein belongs to the iron-sulfur dependent L-serine dehydratase family. Requires [4Fe-4S] cluster as cofactor.

It carries out the reaction L-serine = pyruvate + NH4(+). It functions in the pathway carbohydrate biosynthesis; gluconeogenesis. This chain is L-serine dehydratase (sdaA), found in Streptomyces coelicolor (strain ATCC BAA-471 / A3(2) / M145).